A 346-amino-acid chain; its full sequence is Ribosomal RNA small subunit methyltransferase H (346 aa).

S-adenosyl-L-methionine is bound by residues 46–48, Asp63, Phe90, Asp113, and Gln120; that span reads GGY. Positions 270–346 are disordered; the sequence is GGSAGSRHMP…LPETNELARS (77 aa).

The protein belongs to the methyltransferase superfamily. RsmH family.

It localises to the cytoplasm. It carries out the reaction cytidine(1402) in 16S rRNA + S-adenosyl-L-methionine = N(4)-methylcytidine(1402) in 16S rRNA + S-adenosyl-L-homocysteine + H(+). In terms of biological role, specifically methylates the N4 position of cytidine in position 1402 (C1402) of 16S rRNA. This Brucella abortus (strain S19) protein is Ribosomal RNA small subunit methyltransferase H.